A 510-amino-acid polypeptide reads, in one-letter code: MKQILILDFGSQYTQLIARRLREEQIYCEILPFNTKYEDIIALDPAGVILSGGPSSVYGAGAPKPDPKIFSIDKPVLGICYGMQLLAVNGGGKVTACKKREYGFAEVKIKASTSKLLKGMPKKFTAWMSHGDGVHAMPKNFKVTATTSTSPFSAAEDDKNKRYAVQFHPEVVHTAHGSKILKNFARVICGYKEKWTPASIMTASIAAMKKQIGKGHVICGLSGGVDSSVVAALLAKAIGKNLYCIYVDTGLLRTGDRERTEGLAKKLKVNLKIVDAEKLFLTKLAGVTDPEKKRKIIGALFIEVFEKEAKKFKDAQFLAQGTLYPDVIESMSVKGPSDVIKSHHNVGGLPEKMNLKLVEPLRFLFKDEVRALGRELGLGSEIVDIHPFPGPGLAVRILGAVNKPDLDTLRAADFIVREELYKSGWDKKSWQAFAVLLPIKTVGVMGDERTYEKAACVRCVNSVDGMTADWTKLPYDVLQKISGRIISEVRGINKVVYDITSKPPSTIEWE.

The Glutamine amidotransferase type-1 domain occupies 3–194 (QILILDFGSQ…ARVICGYKEK (192 aa)). Residue Cys-80 is the Nucleophile of the active site. Active-site residues include His-168 and Glu-170. Residues 195-385 (WTPASIMTAS…LGLGSEIVDI (191 aa)) enclose the GMPS ATP-PPase domain. 222–228 (SGGVDSS) lines the ATP pocket.

Homodimer.

It catalyses the reaction XMP + L-glutamine + ATP + H2O = GMP + L-glutamate + AMP + diphosphate + 2 H(+). It functions in the pathway purine metabolism; GMP biosynthesis; GMP from XMP (L-Gln route): step 1/1. Catalyzes the synthesis of GMP from XMP. The chain is GMP synthase [glutamine-hydrolyzing] from Elusimicrobium minutum (strain Pei191).